A 237-amino-acid polypeptide reads, in one-letter code: Ribosomal RNA small subunit methyltransferase G (237 aa).

S-adenosyl-L-methionine is bound by residues Gly78, Phe83, 129–130 (AE), and Arg148.

It belongs to the methyltransferase superfamily. RNA methyltransferase RsmG family.

It localises to the cytoplasm. Its function is as follows. Specifically methylates the N7 position of a guanine in 16S rRNA. In Streptococcus pyogenes serotype M2 (strain MGAS10270), this protein is Ribosomal RNA small subunit methyltransferase G.